The sequence spans 441 residues: Serine hydroxymethyltransferase (441 aa).

A (6S)-5,6,7,8-tetrahydrofolate-binding site is contributed by 124–126; the sequence is GHI. Lys239 carries the post-translational modification N6-(pyridoxal phosphate)lysine.

This sequence belongs to the SHMT family. In terms of assembly, homodimer. The cofactor is pyridoxal 5'-phosphate.

Its subcellular location is the cytoplasm. Its pathway is amino-acid biosynthesis; glycine biosynthesis; glycine from L-serine: step 1/1. In terms of biological role, catalyzes the reversible interconversion of serine and glycine with a modified folate serving as the one-carbon carrier. Also exhibits a pteridine-independent aldolase activity toward beta-hydroxyamino acids, producing glycine and aldehydes, via a retro-aldol mechanism. This Cenarchaeum symbiosum (strain A) protein is Serine hydroxymethyltransferase.